Consider the following 449-residue polypeptide: MLETPKVLLKNLQDCKIHFIGIGGIGISGLAKYLKAQGATISGSDIAISPSVKYLKALGVEINIPHDPKAINNQDVIIHSAIIKEDNKEIQRAKELEIPILSRKDALYSILKDKRVFSVCGAHGKSSITAMLSAICPSFGAIIGAHSKEFDSNVRESANDSLVFEADESDSSFLFSNPYAAIVPNTEPEHLEHYGHDLERFFFAYEYFLDHAQKRVIYKEDPFLKNYSKNAIVLEKKDIYNIQYILKDGEPYTSFELKDLGAFLVWGLGEHNATNASLAILSALDELHLEEIRNNLLNFKGIKKRFDILQKNALILIDDYAHHPTEISATLKSARIYANLLNTQEKIIVIWQAHKYSRLMDNLEEFKKCFSEHCDRLIILPVYSASEVKRDIDLKAHFKHYNPTFIDRVRKKGDFLELLVNDNVVETIEKGFVIGFGAGDITYQLRGEM.

Glycine 121–serine 127 contributes to the ATP binding site.

The protein belongs to the MurCDEF family.

It is found in the cytoplasm. The enzyme catalyses UDP-N-acetyl-alpha-D-muramate + L-alanine + ATP = UDP-N-acetyl-alpha-D-muramoyl-L-alanine + ADP + phosphate + H(+). It participates in cell wall biogenesis; peptidoglycan biosynthesis. In terms of biological role, cell wall formation. This is UDP-N-acetylmuramate--L-alanine ligase from Helicobacter pylori (strain ATCC 700392 / 26695) (Campylobacter pylori).